A 290-amino-acid chain; its full sequence is Ribosomal RNA small subunit methyltransferase A (290 aa).

The S-adenosyl-L-methionine site is built by Asn27, Leu29, Gly54, Glu75, Asp100, and Asn125.

Belongs to the class I-like SAM-binding methyltransferase superfamily. rRNA adenine N(6)-methyltransferase family. RsmA subfamily.

The protein localises to the cytoplasm. The catalysed reaction is adenosine(1518)/adenosine(1519) in 16S rRNA + 4 S-adenosyl-L-methionine = N(6)-dimethyladenosine(1518)/N(6)-dimethyladenosine(1519) in 16S rRNA + 4 S-adenosyl-L-homocysteine + 4 H(+). Its function is as follows. Specifically dimethylates two adjacent adenosines (A1518 and A1519) in the loop of a conserved hairpin near the 3'-end of 16S rRNA in the 30S particle. May play a critical role in biogenesis of 30S subunits. In Streptococcus uberis (strain ATCC BAA-854 / 0140J), this protein is Ribosomal RNA small subunit methyltransferase A.